Here is a 341-residue protein sequence, read N- to C-terminus: Zinc finger protein ZIC 4 (341 aa).

The interval 36–66 (HHGPQLAASSNPSVLPGLHEQPPQASHSRPL) is disordered. The C2H2-type 1; atypical zinc-finger motif lies at 135-169 (LICKWLGDDSPMSPRPCSKTFSTMHELVTHVTVEH). The segment at 178–205 (HICFWEECPRQGKPFKAKYKLVNHIRVH) adopts a C2H2-type 2; atypical zinc-finger fold. C2H2-type zinc fingers lie at residues 211–235 (FPCPFPGCGKVFARSENLKIHKRTH), 241–265 (FRCEFEGCERRFANSSDRKKHSHVH), and 271–295 (YMCKVRGCDKCYTHPSSLRKHMKVH). The tract at residues 289-309 (RKHMKVHGRSPPPSSGYDSAI) is disordered.

The protein belongs to the GLI C2H2-type zinc-finger protein family. Exclusively expressed in the cerebellum.

Its subcellular location is the nucleus. Functionally, binds to DNA. This chain is Zinc finger protein ZIC 4 (Zic4), found in Mus musculus (Mouse).